We begin with the raw amino-acid sequence, 250 residues long: Ribosomal RNA small subunit methyltransferase J (250 aa).

Residues 96–97 and aspartate 168 contribute to the S-adenosyl-L-methionine site; that span reads RD.

This sequence belongs to the methyltransferase superfamily. RsmJ family.

It is found in the cytoplasm. It catalyses the reaction guanosine(1516) in 16S rRNA + S-adenosyl-L-methionine = N(2)-methylguanosine(1516) in 16S rRNA + S-adenosyl-L-homocysteine + H(+). Its function is as follows. Specifically methylates the guanosine in position 1516 of 16S rRNA. In Neisseria meningitidis serogroup C / serotype 2a (strain ATCC 700532 / DSM 15464 / FAM18), this protein is Ribosomal RNA small subunit methyltransferase J.